A 327-amino-acid chain; its full sequence is Malate dehydrogenase (327 aa).

Gly12–Gly18 lines the NAD(+) pocket. Substrate is bound by residues Arg93 and Arg99. NAD(+) contacts are provided by residues Asn106, Gln113, and Val130–Asn132. Asn132 and Arg163 together coordinate substrate. The active-site Proton acceptor is the His188.

This sequence belongs to the LDH/MDH superfamily. MDH type 2 family.

The enzyme catalyses (S)-malate + NAD(+) = oxaloacetate + NADH + H(+). Catalyzes the reversible oxidation of malate to oxaloacetate. The chain is Malate dehydrogenase from Paraburkholderia phymatum (strain DSM 17167 / CIP 108236 / LMG 21445 / STM815) (Burkholderia phymatum).